The sequence spans 125 residues: Histone H2A (125 aa).

The segment covering 1-18 (MSGRGKGGKAKAKAKSRS) has biased composition (basic residues). Residues 1–21 (MSGRGKGGKAKAKAKSRSSRA) form a disordered region. Serine 2 carries the N-acetylserine modification. Residue glutamine 104 is modified to N5-methylglutamine.

Belongs to the histone H2A family. In terms of assembly, the nucleosome is a histone octamer containing two molecules each of H2A, H2B, H3 and H4 assembled in one H3-H4 heterotetramer and two H2A-H2B heterodimers. The octamer wraps approximately 147 bp of DNA.

The protein localises to the nucleus. The protein resides in the chromosome. Core component of nucleosome. Nucleosomes wrap and compact DNA into chromatin, limiting DNA accessibility to the cellular machineries which require DNA as a template. Histones thereby play a central role in transcription regulation, DNA repair, DNA replication and chromosomal stability. DNA accessibility is regulated via a complex set of post-translational modifications of histones, also called histone code, and nucleosome remodeling. The polypeptide is Histone H2A (Mytilus trossulus (Blue mussel)).